The following is a 332-amino-acid chain: L-lactate dehydrogenase C chain (332 aa).

Blocked amino end (Ser) is present on Ser-2. NAD(+) is bound by residues 29–57 (GNVGMACAISILLKGLADELALVDADENK) and Arg-99. Residues Arg-106, Asn-138, and Arg-169 each coordinate substrate. Asn-138 provides a ligand contact to NAD(+). His-193 acts as the Proton acceptor in catalysis. Position 248 (Thr-248) interacts with substrate.

Belongs to the LDH/MDH superfamily. LDH family. As to quaternary structure, homotetramer. Interacts with RABL2/RABL2A; binds preferentially to GTP-bound RABL2.

The protein localises to the cytoplasm. The enzyme catalyses (S)-lactate + NAD(+) = pyruvate + NADH + H(+). Its pathway is fermentation; pyruvate fermentation to lactate; (S)-lactate from pyruvate: step 1/1. Possible role in sperm motility. The protein is L-lactate dehydrogenase C chain (Ldhc) of Rattus norvegicus (Rat).